The following is a 1036-amino-acid chain: PDZ domain-containing RING finger protein 4 (1036 aa).

Residues C18 to C56 form an RING-type; degenerate zinc finger. Positions A129–P160 are enriched in gly residues. Residues A129–G161 form a disordered region. PDZ domains lie at T224 to T314 and E402 to P486. A disordered region spans residues H515–Q590. A compositionally biased stretch (basic and acidic residues) spans N548–E566. The stretch at N655 to L689 forms a coiled coil. Residues E726 to S735 are compositionally biased toward basic and acidic residues. The interval E726–Q819 is disordered. Residues S736–L750 show a composition bias toward polar residues. The span at S774–E799 shows a compositional bias: low complexity. Residues E805–Q819 show a composition bias toward basic and acidic residues.

This is PDZ domain-containing RING finger protein 4 (PDZRN4) from Homo sapiens (Human).